The sequence spans 228 residues: Translin (228 aa).

The DNA/RNA binding stretch occupies residues 86-90; the sequence is RFHEH. Residues 177-198 form a leucine-zipper region; that stretch reads LDSGFRLLNLKNDSLRKRYDGL. An N6-acetyllysine modification is found at lysine 187. Position 190 is a phosphoserine (serine 190). Residue lysine 199 is modified to N6-acetyllysine.

This sequence belongs to the translin family. Ring-shaped heterooctamer of six TSN and two TSNAX subunits, DNA/RNA binding occurs inside the ring.

Its subcellular location is the cytoplasm. It is found in the nucleus. DNA-binding protein that specifically recognizes consensus sequences at the breakpoint junctions in chromosomal translocations, mostly involving immunoglobulin (Ig)/T-cell receptor gene segments. Seems to recognize single-stranded DNA ends generated by staggered breaks occurring at recombination hot spots. Its function is as follows. Exhibits both single-stranded and double-stranded endoribonuclease activity. May act as an activator of RNA-induced silencing complex (RISC) by facilitating endonucleolytic cleavage of the siRNA passenger strand. This Homo sapiens (Human) protein is Translin.